Here is a 713-residue protein sequence, read N- to C-terminus: Serine/threonine-protein kinase SSN3 (713 aa).

Residues 66–484 (YTILGFLSSG…ANQALEHAWF (419 aa)) form the Protein kinase domain. Residue 72–80 (LSSGTYGRV) coordinates ATP. Over residues 104–120 (NAGTGSGTATVGSGAST) the composition is skewed to low complexity. The interval 104–188 (NAGTGSGTAT…GGSDNTLQLS (85 aa)) is disordered. Positions 129-142 (QQHQLLDSPSSSLH) are enriched in polar residues. Low complexity predominate over residues 158-175 (GTPSASPSLSASLGTSTA). Lys-201 lines the ATP pocket. Residue Asp-304 is the Proton acceptor of the active site. Residues 657–672 (SNPATVRSSHSIGSTE) are compositionally biased toward polar residues. Positions 657 to 713 (SNPATVRSSHSIGSTESITPTTSSQPIPAQPSSAPLARTTNLVATATRNQQRKRQRN) are disordered. Residues 673-691 (SITPTTSSQPIPAQPSSAP) are compositionally biased toward low complexity. Residues 694–705 (RTTNLVATATRN) show a composition bias toward polar residues.

Belongs to the protein kinase superfamily. CMGC Ser/Thr protein kinase family. CDC2/CDKX subfamily. Component of the srb8-11 complex, a regulatory module of the Mediator complex. The cofactor is Mg(2+).

It localises to the nucleus. The enzyme catalyses L-seryl-[protein] + ATP = O-phospho-L-seryl-[protein] + ADP + H(+). The catalysed reaction is L-threonyl-[protein] + ATP = O-phospho-L-threonyl-[protein] + ADP + H(+). It carries out the reaction [DNA-directed RNA polymerase] + ATP = phospho-[DNA-directed RNA polymerase] + ADP + H(+). In terms of biological role, component of the srb8-11 complex. The srb8-11 complex is a regulatory module of the Mediator complex which is itself dependent transcription. The srb8-11 complex may be involved in the transcriptional repression of a subset of genes regulated by Mediator. It may inhibit the association of the Mediator complex with RNA polymerase II to form the holoenzyme complex. The srb8-11 complex phosphorylates the C-terminal domain (CTD) of the largest subunit of RNA polymerase II. The chain is Serine/threonine-protein kinase SSN3 (SSN3) from Mycosarcoma maydis (Corn smut fungus).